A 44-amino-acid chain; its full sequence is Thymosin beta-4 (44 aa).

Positions 1-25 (MSDKPDMAEIEKFDKSKLKKTETQE) are enriched in basic and acidic residues. Positions 1–44 (MSDKPDMAEIEKFDKSKLKKTETQEKNPLPSKETIEQEKQAGES) are disordered. Serine 2 is modified (N-acetylserine). Serine 2 is modified (phosphoserine). An N6-acetyllysine modification is found at lysine 4. Lysine 12 bears the N6-acetyllysine; alternate mark. Residue lysine 12 forms a Glycyl lysine isopeptide (Lys-Gly) (interchain with G-Cter in SUMO2); alternate linkage. Threonine 23 bears the Phosphothreonine mark. Residue lysine 26 is modified to N6-acetyllysine. Serine 31 is subject to Phosphoserine. N6-acetyllysine is present on lysine 32. Basic and acidic residues predominate over residues 33–44 (ETIEQEKQAGES). Threonine 34 carries the post-translational modification Phosphothreonine. Position 39 is an N6-acetyllysine (lysine 39).

It belongs to the thymosin beta family. In terms of assembly, identified in a complex composed of ACTA1, COBL, GSN AND TMSB4X. Interacts with SERPINB1. AcSDKP is inactivated by ACE, which removes the dipeptide Lys-Pro from its C-terminus.

It localises to the cytoplasm. The protein localises to the cytoskeleton. Plays an important role in the organization of the cytoskeleton. Binds to and sequesters actin monomers (G actin) and therefore inhibits actin polymerization. Its function is as follows. Potent inhibitor of bone marrow derived stem cell differentiation. Acts by inhibits the entry of hematopoietic pluripotent stem cells into the S-phase. In Bos taurus (Bovine), this protein is Thymosin beta-4 (TMSB4).